A 428-amino-acid polypeptide reads, in one-letter code: Histidinol dehydrogenase (428 aa).

NAD(+) contacts are provided by Y126, Q188, and N211. Substrate-binding residues include S234, Q256, and H259. Residues Q256 and H259 each contribute to the Zn(2+) site. Active-site proton acceptor residues include E324 and H325. Positions 325, 358, 412, and 417 each coordinate substrate. Zn(2+) is bound at residue D358. H417 is a Zn(2+) binding site.

This sequence belongs to the histidinol dehydrogenase family. Zn(2+) serves as cofactor.

The enzyme catalyses L-histidinol + 2 NAD(+) + H2O = L-histidine + 2 NADH + 3 H(+). The protein operates within amino-acid biosynthesis; L-histidine biosynthesis; L-histidine from 5-phospho-alpha-D-ribose 1-diphosphate: step 9/9. Its function is as follows. Catalyzes the sequential NAD-dependent oxidations of L-histidinol to L-histidinaldehyde and then to L-histidine. The sequence is that of Histidinol dehydrogenase from Chlorobaculum tepidum (strain ATCC 49652 / DSM 12025 / NBRC 103806 / TLS) (Chlorobium tepidum).